The primary structure comprises 468 residues: 3-isopropylmalate dehydratase large subunit (468 aa).

Cysteine 347, cysteine 407, and cysteine 410 together coordinate [4Fe-4S] cluster.

This sequence belongs to the aconitase/IPM isomerase family. LeuC type 1 subfamily. Heterodimer of LeuC and LeuD. [4Fe-4S] cluster serves as cofactor.

It carries out the reaction (2R,3S)-3-isopropylmalate = (2S)-2-isopropylmalate. Its pathway is amino-acid biosynthesis; L-leucine biosynthesis; L-leucine from 3-methyl-2-oxobutanoate: step 2/4. Functionally, catalyzes the isomerization between 2-isopropylmalate and 3-isopropylmalate, via the formation of 2-isopropylmaleate. This chain is 3-isopropylmalate dehydratase large subunit, found in Glaesserella parasuis serovar 5 (strain SH0165) (Haemophilus parasuis).